The chain runs to 387 residues: Glucose-1-phosphate adenylyltransferase (387 aa).

Alpha-D-glucose 1-phosphate-binding positions include Y99, G164, 179–180, and S190; that span reads EK.

The protein belongs to the bacterial/plant glucose-1-phosphate adenylyltransferase family. As to quaternary structure, homotetramer.

It catalyses the reaction alpha-D-glucose 1-phosphate + ATP + H(+) = ADP-alpha-D-glucose + diphosphate. It participates in glycan biosynthesis; glycogen biosynthesis. In terms of biological role, involved in the biosynthesis of ADP-glucose, a building block required for the elongation reactions to produce glycogen. Catalyzes the reaction between ATP and alpha-D-glucose 1-phosphate (G1P) to produce pyrophosphate and ADP-Glc. This is Glucose-1-phosphate adenylyltransferase from Geobacillus stearothermophilus (Bacillus stearothermophilus).